The sequence spans 204 residues: UPF0301 protein Mflv_0850 (204 aa).

The protein belongs to the UPF0301 (AlgH) family.

This Mycolicibacterium gilvum (strain PYR-GCK) (Mycobacterium gilvum (strain PYR-GCK)) protein is UPF0301 protein Mflv_0850.